We begin with the raw amino-acid sequence, 194 residues long: Ras-related protein Rab-22A (194 aa).

A GTP-binding site is contributed by 12-20; the sequence is GDTGVGKSS. The short motif at 34–42 is the Effector region element; that stretch reads INPTIGASF. Residues 60–64, 118–121, and 148–150 contribute to the GTP site; these read DTAGQ, NKCD, and SAK. A disordered region spans residues 170–194; that stretch reads DANPASGGKGFKLRRQPSEPKRSCC. Residues 185-194 show a composition bias toward basic and acidic residues; it reads QPSEPKRSCC. 2 S-geranylgeranyl cysteine lipidation sites follow: cysteine 193 and cysteine 194.

Belongs to the small GTPase superfamily. Rab family. Binds EEA1. Interacts (in its GTP-bound form) with RINL. Interacts directly with ZFYVE20. Interacts (in its GTP-bound form) with RABGEF1. In terms of tissue distribution, detected in brain and heart, and at lower levels in lung and spleen.

The protein resides in the endosome membrane. The protein localises to the cell membrane. It is found in the early endosome. Its subcellular location is the late endosome. It localises to the cell projection. The protein resides in the ruffle. The protein localises to the cytoplasmic vesicle. It is found in the phagosome. Its subcellular location is the phagosome membrane. In terms of biological role, plays a role in endocytosis and intracellular protein transport. Mediates trafficking of TF from early endosomes to recycling endosomes. Required for NGF-mediated endocytosis of NTRK1, and subsequent neurite outgrowth. Binds GTP and GDP and has low GTPase activity. Alternates between a GTP-bound active form and a GDP-bound inactive form. The polypeptide is Ras-related protein Rab-22A (Rab22a) (Mus musculus (Mouse)).